Consider the following 234-residue polypeptide: Probable transcriptional regulatory protein MYCGA1330 (234 aa).

The protein belongs to the TACO1 family.

It localises to the cytoplasm. The polypeptide is Probable transcriptional regulatory protein MYCGA1330 (Mycoplasmoides gallisepticum (strain R(low / passage 15 / clone 2)) (Mycoplasma gallisepticum)).